The sequence spans 200 residues: Recombination protein RecR (200 aa).

A C4-type zinc finger spans residues 58-73 (CSLCCNLTDEDPCSIC). Residues 81–176 (NLLCVVEEPR…KVTRIAHGIP (96 aa)) form the Toprim domain.

Belongs to the RecR family.

Its function is as follows. May play a role in DNA repair. It seems to be involved in an RecBC-independent recombinational process of DNA repair. It may act with RecF and RecO. The protein is Recombination protein RecR of Desulforamulus reducens (strain ATCC BAA-1160 / DSM 100696 / MI-1) (Desulfotomaculum reducens).